Here is a 391-residue protein sequence, read N- to C-terminus: Thioredoxin-interacting protein (391 aa).

Lys212 is covalently cross-linked (Glycyl lysine isopeptide (Lys-Gly) (interchain with G-Cter in ubiquitin)). Ser361 is subject to Phosphoserine.

It belongs to the arrestin family. Homodimer; disulfide-linked. Interacts with TXN/thioredoxin through its redox-active site. Interacts with transcriptional repressors ZBTB16, ZBTB32 and HDAC1. Interacts with DDIT4. In terms of processing, ubiquitinated; undergoes heterotypic 'Lys-48'-/'Lys-63'-branched polyubiquitination catalyzed by ITCH and UBR5 resulting in proteasomal degradation. Deubiquitinated by USP5, leading to TXNIP stabilization.

The protein localises to the cytoplasm. The protein resides in the nucleus. In terms of biological role, may act as an oxidative stress mediator by inhibiting thioredoxin activity or by limiting its bioavailability. Interacts with COPS5 and restores COPS5-induced suppression of CDKN1B stability, blocking the COPS5-mediated translocation of CDKN1B from the nucleus to the cytoplasm. Functions as a transcriptional repressor, possibly by acting as a bridge molecule between transcription factors and corepressor complexes, and over-expression will induce G0/G1 cell cycle arrest. Required for the maturation of natural killer cells. Acts as a suppressor of tumor cell growth. Inhibits the proteasomal degradation of DDIT4, and thereby contributes to the inhibition of the mammalian target of rapamycin complex 1 (mTORC1). This is Thioredoxin-interacting protein (TXNIP) from Homo sapiens (Human).